A 456-amino-acid polypeptide reads, in one-letter code: Carnosine N-methyltransferase unmet (456 aa).

Residues arginine 154, glycine 195, glutamate 216, aspartate 282, phenylalanine 283, and cysteine 299 each coordinate S-adenosyl-L-methionine. Aspartate 303, histidine 334, and tyrosine 385 together coordinate carnosine. Over residues arginine 402–glutamate 418 the composition is skewed to basic and acidic residues. The segment at arginine 402–serine 456 is disordered. Serine 408 and serine 420 each carry phosphoserine. Over residues glutamine 427–glutamine 438 the composition is skewed to basic and acidic residues.

It belongs to the carnosine N-methyltransferase family. In terms of assembly, associates with the GATOR2 complex; the interaction is probably direct and is inhibited by S-adenosyl-L-methionine binding. Associates with the GATOR1 complex; the interaction is probably indirect and mediated by the GATOR2 complex.

It catalyses the reaction carnosine + S-adenosyl-L-methionine = anserine + S-adenosyl-L-homocysteine + H(+). S-adenosyl-L-methionine-binding protein that acts as a sensor to signal methionine availability to the mTORC1 signaling pathway. Associates with the GATOR2 complex in the absence of methionine to inhibit mTORC1 signaling, but dissociates in the presence of the methionine derivative S-adenosyl-L-methionine; S-adenosyl-L-homocysteine binding does not induce dissociation. Required for mTORC1 pathway response to methionine starvation. Exerts a protective function on developing egg chambers by inhibiting mTORC1 signaling under starvation conditions. May also function as a N-methyltransferase that mediates the formation of anserine (beta-alanyl-N(Pi)-methyl-L-histidine) from carnosine. It is unclear whether this protein has retained N-methyltransferase activity or if it is an evolutionary intermediate whose substrate binding ability has been co-opted to function as a nutrient sensor for mTORC1 signaling. The polypeptide is Carnosine N-methyltransferase unmet (Drosophila melanogaster (Fruit fly)).